Consider the following 335-residue polypeptide: DNA-directed RNA polymerase RPB7 homolog (335 aa).

This sequence belongs to the Asfivirus DNA-directed RNA polymerase RPB7 homolog family. As to quaternary structure, part of the viral DNA-directed RNA polymerase that consists of 8 polII-like subunits (RPB1, RPB2, RPB3, RPB5, RPB6, RPB7, RPB9, RPB10), a capping enzyme and a termination factor.

It localises to the host cytoplasm. Its subcellular location is the virion. In terms of biological role, component of the DNA-directed RNA polymerase (RNAP) that catalyzes the transcription in the cytoplasm of viral DNA into RNA using the four ribonucleoside triphosphates as substrates. In African swine fever virus (isolate Pig/Kenya/KEN-50/1950) (ASFV), this protein is DNA-directed RNA polymerase RPB7 homolog.